The following is a 400-amino-acid chain: MLNSLDLEGRPQDTRVVVAMSGGVDSSVTAALLKSEGYDVVGITLQLYDHGAATHRKGACCAGQDIHDARNVAARLGVPHYVLDYESRFRETVIENFADSYASGETPVPCIECNRQVKFRDLLATARELGAAALATGHYVSSRRLADGSRALLCAADTDRDQSYFLFATTREQLDFLRFPLGDMTKQQTRELARRFGLSVADKHDSQDICFVPTGRYTDIISRLKPNAMVSGDIVDLDGHVIGHHEGIVHFTVGQRRGLGIASGAPLYVLSLDAANRRVVVGPREALKMHRIVLRDVNWIGDGALDRAIGAGLELFVRVRSTRRPQPAWLRVVDGRYEVELVAGEEGVSPGQACVFYDGAEGQSRVLGGGFIARAMAQRANEAAAQSGTLAQSFAAELRG.

ATP is bound by residues Ala-19–Ser-26 and Leu-45. Cys-113 acts as the Nucleophile in catalysis. Cys-113 and Cys-210 are joined by a disulfide. Residue Gly-137 coordinates ATP. Residues Arg-160 to Gln-162 are interaction with tRNA. Cys-210 serves as the catalytic Cysteine persulfide intermediate.

This sequence belongs to the MnmA/TRMU family.

Its subcellular location is the cytoplasm. The enzyme catalyses S-sulfanyl-L-cysteinyl-[protein] + uridine(34) in tRNA + AH2 + ATP = 2-thiouridine(34) in tRNA + L-cysteinyl-[protein] + A + AMP + diphosphate + H(+). Functionally, catalyzes the 2-thiolation of uridine at the wobble position (U34) of tRNA, leading to the formation of s(2)U34. This is tRNA-specific 2-thiouridylase MnmA from Nitrobacter winogradskyi (strain ATCC 25391 / DSM 10237 / CIP 104748 / NCIMB 11846 / Nb-255).